The sequence spans 240 residues: Aspartate/glutamate leucyltransferase (240 aa).

This sequence belongs to the R-transferase family. Bpt subfamily.

It localises to the cytoplasm. It carries out the reaction N-terminal L-glutamyl-[protein] + L-leucyl-tRNA(Leu) = N-terminal L-leucyl-L-glutamyl-[protein] + tRNA(Leu) + H(+). The catalysed reaction is N-terminal L-aspartyl-[protein] + L-leucyl-tRNA(Leu) = N-terminal L-leucyl-L-aspartyl-[protein] + tRNA(Leu) + H(+). Functionally, functions in the N-end rule pathway of protein degradation where it conjugates Leu from its aminoacyl-tRNA to the N-termini of proteins containing an N-terminal aspartate or glutamate. The protein is Aspartate/glutamate leucyltransferase of Gluconobacter oxydans (strain 621H) (Gluconobacter suboxydans).